The primary structure comprises 571 residues: Proline--tRNA ligase (571 aa).

The protein belongs to the class-II aminoacyl-tRNA synthetase family. ProS type 1 subfamily. As to quaternary structure, homodimer.

The protein resides in the cytoplasm. The enzyme catalyses tRNA(Pro) + L-proline + ATP = L-prolyl-tRNA(Pro) + AMP + diphosphate. Functionally, catalyzes the attachment of proline to tRNA(Pro) in a two-step reaction: proline is first activated by ATP to form Pro-AMP and then transferred to the acceptor end of tRNA(Pro). As ProRS can inadvertently accommodate and process non-cognate amino acids such as alanine and cysteine, to avoid such errors it has two additional distinct editing activities against alanine. One activity is designated as 'pretransfer' editing and involves the tRNA(Pro)-independent hydrolysis of activated Ala-AMP. The other activity is designated 'posttransfer' editing and involves deacylation of mischarged Ala-tRNA(Pro). The misacylated Cys-tRNA(Pro) is not edited by ProRS. The polypeptide is Proline--tRNA ligase (Pseudomonas syringae pv. syringae (strain B728a)).